The chain runs to 175 residues: Large ribosomal subunit protein uL10 (175 aa).

This sequence belongs to the universal ribosomal protein uL10 family. In terms of assembly, part of the ribosomal stalk of the 50S ribosomal subunit. The N-terminus interacts with L11 and the large rRNA to form the base of the stalk. The C-terminus forms an elongated spine to which L12 dimers bind in a sequential fashion forming a multimeric L10(L12)X complex.

Its function is as follows. Forms part of the ribosomal stalk, playing a central role in the interaction of the ribosome with GTP-bound translation factors. The polypeptide is Large ribosomal subunit protein uL10 (Synechococcus sp. (strain CC9311)).